The following is a 642-amino-acid chain: MPIITLPDGSQRQFDNPVSTMDVALSIGPGLAKATIAGRVNGQRVDACDLIEEDASLEIITTKDEVDGLEIVRHSCAHLLGHALKQLYPNAKMAIGPTIDNGFYYDIDLEESLTQEDLEKIEARMKALAKTKYQVIKKKVSWQEARDAFEARGETYKMEILDENVSRDDRPGLYHHEEYIDMCRGPHVPNMSFCQHFTLLNVAGAYWRGNSDNKMLQRIYGTAFHDKKALKDHLTRLEEAAKRDHRKIGKQLDLFHMQQEAPGMVFWHHNGWSVFRDLEVFIREKLTEYGYQEVKGPLMMDRVLWERSGHWDKYADAMFTTSSENREYAIKPMNCPGHVQIFNQGLKSYRDLPLRMAEFGSCHRNEPSGALHGIMRVRGFTQDDAHIFCTESQIQDEVTNCIKMVYDTYQTFGFDNIAVKLSTRPEQRVGSDEIWDQSEEALKQALESMDIAYEIQEGEGAFYGPKIEFTLFDCLGRAWQCGTVQLDFNLPNRLGATYVGENNERLVPVMIHRAILGSLERFIGILIEEYAGFFPTWLAPEQAVIMNITDKQADYVQEIAQKLQKCGIRAKADLRNEKIGFKIREHTLKRVPFMLVCGDQEMEAGEIAVRTRKGNDLGKFKVDDFVSYIQDQIASRKLNLEE.

Residues 1–61 (MPIITLPDGS…EEDASLEIIT (61 aa)) form the TGS domain. The catalytic stretch occupies residues 244 to 535 (DHRKIGKQLD…LIEEYAGFFP (292 aa)). Zn(2+) contacts are provided by Cys-335, His-386, and His-512.

It belongs to the class-II aminoacyl-tRNA synthetase family. In terms of assembly, homodimer. Requires Zn(2+) as cofactor.

The protein resides in the cytoplasm. The enzyme catalyses tRNA(Thr) + L-threonine + ATP = L-threonyl-tRNA(Thr) + AMP + diphosphate + H(+). Its function is as follows. Catalyzes the attachment of threonine to tRNA(Thr) in a two-step reaction: L-threonine is first activated by ATP to form Thr-AMP and then transferred to the acceptor end of tRNA(Thr). Also edits incorrectly charged L-seryl-tRNA(Thr). The polypeptide is Threonine--tRNA ligase (Vibrio vulnificus (strain CMCP6)).